A 607-amino-acid chain; its full sequence is Phosphomethylpyrimidine synthase (607 aa).

Substrate-binding positions include N216, M245, Y274, H310, 330–332, 371–374, and E410; these read SRG and DGLR. Zn(2+) is bound at residue H414. Y437 is a substrate binding site. A Zn(2+)-binding site is contributed by H478. Residues C558, C561, and C566 each coordinate [4Fe-4S] cluster.

It belongs to the ThiC family. In terms of assembly, homodimer. [4Fe-4S] cluster is required as a cofactor.

The enzyme catalyses 5-amino-1-(5-phospho-beta-D-ribosyl)imidazole + S-adenosyl-L-methionine = 4-amino-2-methyl-5-(phosphooxymethyl)pyrimidine + CO + 5'-deoxyadenosine + formate + L-methionine + 3 H(+). The protein operates within cofactor biosynthesis; thiamine diphosphate biosynthesis. Catalyzes the synthesis of the hydroxymethylpyrimidine phosphate (HMP-P) moiety of thiamine from aminoimidazole ribotide (AIR) in a radical S-adenosyl-L-methionine (SAM)-dependent reaction. This Agrobacterium fabrum (strain C58 / ATCC 33970) (Agrobacterium tumefaciens (strain C58)) protein is Phosphomethylpyrimidine synthase.